The chain runs to 223 residues: Sigma non-opioid intracellular receptor 1 (223 aa).

At 1-9 (MQWALGRRW) the chain is on the lumenal side. Residues 2–8 (QWALGRR) are targeting to endoplasmic reticulum-associated lipid droplets. Residues 10-30 (VWAALLLAAAAVLTQVVWLWL) traverse the membrane as a helical segment. The Cytoplasmic segment spans residues 31–223 (GTQSFVFQHE…FTTYLFGQDS (193 aa)). The important for ligand-binding stretch occupies residues 99–106 (SLSEYVLL). The interval 177 to 223 (VIPSTLAFALADTIFSTQDFLTLFYTLRAYARGLRLEFTTYLFGQDS) is C-terminal hydrophobic region.

Belongs to the ERG2 family. Homotrimer. Forms a ternary complex with ANK2 and ITPR3. The complex is disrupted by agonists. Interacts with KCNA4. Interacts with KCNA2; cocaine consumption leads to increased interaction. Interacts with RNF112 in an oxidative stress-regulated manner.

It localises to the nucleus inner membrane. The protein resides in the nucleus outer membrane. The protein localises to the nucleus envelope. It is found in the cytoplasmic vesicle. Its subcellular location is the endoplasmic reticulum membrane. It localises to the membrane. The protein resides in the lipid droplet. The protein localises to the cell junction. It is found in the cell membrane. Its subcellular location is the cell projection. It localises to the growth cone. The protein resides in the postsynaptic density membrane. Functionally, functions in lipid transport from the endoplasmic reticulum and is involved in a wide array of cellular functions probably through regulation of the biogenesis of lipid microdomains at the plasma membrane. Involved in the regulation of different receptors it plays a role in BDNF signaling and EGF signaling. Also regulates ion channels like the potassium channel and could modulate neurotransmitter release. Plays a role in calcium signaling through modulation together with ANK2 of the ITP3R-dependent calcium efflux at the endoplasmic reticulum. Plays a role in several other cell functions including proliferation, survival and death. Originally identified for its ability to bind various psychoactive drugs it is involved in learning processes, memory and mood alteration. Necessary for proper mitochondrial axonal transport in motor neurons, in particular the retrograde movement of mitochondria. Plays a role in protecting cells against oxidative stress-induced cell death via its interaction with RNF112. This Mustela erminea (Ermine) protein is Sigma non-opioid intracellular receptor 1 (SIGMAR1).